The chain runs to 97 residues: MTMSTNLCAIYKSPKREGMFLYVAKRDQFDSVPEALRQMFGKPQFVMLFNLNGEKQLKRSKNEEVLQAIQTQGFFLQMPPPPENLLKTFLEQNRGEA.

In terms of domain architecture, YcgL spans Asn6–Leu90.

The chain is YcgL domain-containing protein APP7_0754 from Actinobacillus pleuropneumoniae serotype 7 (strain AP76).